A 159-amino-acid polypeptide reads, in one-letter code: UPF0225 protein plu2503 (159 aa).

Belongs to the UPF0225 family.

This Photorhabdus laumondii subsp. laumondii (strain DSM 15139 / CIP 105565 / TT01) (Photorhabdus luminescens subsp. laumondii) protein is UPF0225 protein plu2503.